The following is a 404-amino-acid chain: Probable sugar efflux transporter (404 aa).

12 helical membrane-spanning segments follow: residues 15–35 (VITFALAGFVFNTTEFIPVAL), 51–71 (GLIITVYAWVVSLMSLPFMLL), 85–105 (LVLFILSHLLSVIAWDFWVLV), 109–129 (IGVALTHSIFWAITASLVIRV), 137–157 (QAIGLLAIGCSLAMILGLPLG), 168–188 (ATFAIIALIAIGILCLFYQLL), 209–229 (PLLLGLYALTMIIISAHFTAY), 245–265 (SMATFVLFVFGLSGITASLLF), 276–296 (FILFSMGLLTATLLLLFIASQ), 299–319 (WTMFLLTFFWGIGIAGIGLGL), 333–353 (VAMAIYSGIYNIGIGAGALLG), and 363–383 (AYIGVAGALFAVFGLVLFILV).

It belongs to the major facilitator superfamily. SotB (TC 2.A.1.2) family.

The protein resides in the cell inner membrane. In terms of biological role, involved in the efflux of sugars. The physiological role may be the reduction of the intracellular concentration of toxic sugars or sugar metabolites. The chain is Probable sugar efflux transporter from Pasteurella multocida (strain Pm70).